Consider the following 203-residue polypeptide: High frequency lysogenization protein HflD homolog (203 aa).

The protein belongs to the HflD family.

Its subcellular location is the cytoplasm. It localises to the cell inner membrane. This chain is High frequency lysogenization protein HflD homolog, found in Histophilus somni (strain 2336) (Haemophilus somnus).